Consider the following 369-residue polypeptide: Eukaryotic translation initiation factor 3 subunit F (369 aa).

One can recognise an MPN domain in the interval 31 to 170 (VNIQPQAVFS…TKTYISAPVA (140 aa)). Over residues 309–334 (LDEGKEGGEKKDGEGAEGDKKTDGQR) the composition is skewed to basic and acidic residues. The interval 309–369 (LDEGKEGGEK…EPREPREAAE (61 aa)) is disordered. The span at 335 to 353 (GQRGQGGKRGGRSGGAGGR) shows a compositional bias: gly residues. Residues 354–369 (GGREQREPREPREAAE) are compositionally biased toward basic and acidic residues.

This sequence belongs to the eIF-3 subunit F family. As to quaternary structure, component of the eukaryotic translation initiation factor 3 (eIF-3) complex.

The protein resides in the cytoplasm. Functionally, component of the eukaryotic translation initiation factor 3 (eIF-3) complex, which is involved in protein synthesis of a specialized repertoire of mRNAs and, together with other initiation factors, stimulates binding of mRNA and methionyl-tRNAi to the 40S ribosome. The eIF-3 complex specifically targets and initiates translation of a subset of mRNAs involved in cell proliferation. In Neurospora crassa (strain ATCC 24698 / 74-OR23-1A / CBS 708.71 / DSM 1257 / FGSC 987), this protein is Eukaryotic translation initiation factor 3 subunit F.